We begin with the raw amino-acid sequence, 181 residues long: Protein GrpE (181 aa).

Positions 1–20 (MENTQENPASQSAEENGSET) are enriched in polar residues. A disordered region spans residues 1 to 39 (MENTQENPASQSAEENGSETQAAQDAAPAAEAADAALAE). The span at 21–39 (QAAQDAAPAAEAADAALAE) shows a compositional bias: low complexity.

It belongs to the GrpE family. As to quaternary structure, homodimer.

The protein resides in the cytoplasm. Functionally, participates actively in the response to hyperosmotic and heat shock by preventing the aggregation of stress-denatured proteins, in association with DnaK and GrpE. It is the nucleotide exchange factor for DnaK and may function as a thermosensor. Unfolded proteins bind initially to DnaJ; upon interaction with the DnaJ-bound protein, DnaK hydrolyzes its bound ATP, resulting in the formation of a stable complex. GrpE releases ADP from DnaK; ATP binding to DnaK triggers the release of the substrate protein, thus completing the reaction cycle. Several rounds of ATP-dependent interactions between DnaJ, DnaK and GrpE are required for fully efficient folding. This is Protein GrpE from Burkholderia multivorans (strain ATCC 17616 / 249).